A 145-amino-acid polypeptide reads, in one-letter code: Transcription antitermination protein NusB (145 aa).

This sequence belongs to the NusB family.

Functionally, involved in transcription antitermination. Required for transcription of ribosomal RNA (rRNA) genes. Binds specifically to the boxA antiterminator sequence of the ribosomal RNA (rrn) operons. This is Transcription antitermination protein NusB from Psychromonas ingrahamii (strain DSM 17664 / CCUG 51855 / 37).